A 455-amino-acid chain; its full sequence is GTPase Der (455 aa).

EngA-type G domains follow at residues 4–169 and 178–353; these read PVVA…PPKD and IQMA…EQHR. GTP is bound by residues 10–17, 57–61, 120–123, 184–191, 231–235, and 296–299; these read GRPNVGKS, DTGGL, NKCE, DTAGI, and NKWD. Positions 354–439 constitute a KH-like domain; sequence RRVSTSVVNE…PLRLFWRGKQ (86 aa).

This sequence belongs to the TRAFAC class TrmE-Era-EngA-EngB-Septin-like GTPase superfamily. EngA (Der) GTPase family. Associates with the 50S ribosomal subunit.

Its function is as follows. GTPase that plays an essential role in the late steps of ribosome biogenesis. This chain is GTPase Der, found in Synechococcus sp. (strain CC9605).